The primary structure comprises 466 residues: Asparagine--tRNA ligase (466 aa).

It belongs to the class-II aminoacyl-tRNA synthetase family. In terms of assembly, homodimer.

It localises to the cytoplasm. It carries out the reaction tRNA(Asn) + L-asparagine + ATP = L-asparaginyl-tRNA(Asn) + AMP + diphosphate + H(+). The polypeptide is Asparagine--tRNA ligase (Shewanella pealeana (strain ATCC 700345 / ANG-SQ1)).